The chain runs to 352 residues: Protein RecA (352 aa).

An ATP-binding site is contributed by 64–71 (GPESSGKT). Residues 328–352 (NPSSVPEAEAEHDPEQDEEPTFDLE) are disordered. The span at 335 to 352 (AEAEHDPEQDEEPTFDLE) shows a compositional bias: acidic residues.

The protein belongs to the RecA family.

The protein localises to the cytoplasm. Functionally, can catalyze the hydrolysis of ATP in the presence of single-stranded DNA, the ATP-dependent uptake of single-stranded DNA by duplex DNA, and the ATP-dependent hybridization of homologous single-stranded DNAs. It interacts with LexA causing its activation and leading to its autocatalytic cleavage. The sequence is that of Protein RecA from Brevibacillus brevis (strain 47 / JCM 6285 / NBRC 100599).